Here is a 158-residue protein sequence, read N- to C-terminus: Transcription elongation factor GreA (158 aa).

Residues 45–73 (AEYHAAREQQSFIEGRIKQLESELSHAEI) adopt a coiled-coil conformation.

The protein belongs to the GreA/GreB family.

Its function is as follows. Necessary for efficient RNA polymerase transcription elongation past template-encoded arresting sites. The arresting sites in DNA have the property of trapping a certain fraction of elongating RNA polymerases that pass through, resulting in locked ternary complexes. Cleavage of the nascent transcript by cleavage factors such as GreA or GreB allows the resumption of elongation from the new 3'terminus. GreA releases sequences of 2 to 3 nucleotides. This Xanthomonas axonopodis pv. citri (strain 306) protein is Transcription elongation factor GreA.